The chain runs to 199 residues: Inner membrane-spanning protein YciB (199 aa).

6 consecutive transmembrane segments (helical) span residues 4 to 24 (FIDF…PRIV), 36 to 56 (IFSA…TLFL), 64 to 84 (GQWI…TFQS), 90 to 110 (WKAP…HFIG), 135 to 155 (LAWV…AFTF), and 162 to 182 (FKVF…GVFL).

The protein belongs to the YciB family.

Its subcellular location is the cell inner membrane. Plays a role in cell envelope biogenesis, maintenance of cell envelope integrity and membrane homeostasis. This is Inner membrane-spanning protein YciB from Azotobacter vinelandii (strain DJ / ATCC BAA-1303).